The primary structure comprises 113 residues: Putative increased recombination centers protein 14 (113 aa).

The protein is Putative increased recombination centers protein 14 (IRC14) of Saccharomyces cerevisiae (strain ATCC 204508 / S288c) (Baker's yeast).